The primary structure comprises 287 residues: Shikimate dehydrogenase (NADP(+)) (287 aa).

Residues 21 to 23 (SKS) and Thr-68 contribute to the shikimate site. The active-site Proton acceptor is the Lys-72. Residues Asn-93 and Asp-109 each contribute to the shikimate site. Residues 133–137 (GAGGA), 157–162 (NRTQTK), and Met-226 contribute to the NADP(+) site. Residue Tyr-228 participates in shikimate binding. Gly-250 contributes to the NADP(+) binding site.

The protein belongs to the shikimate dehydrogenase family. As to quaternary structure, homodimer.

It carries out the reaction shikimate + NADP(+) = 3-dehydroshikimate + NADPH + H(+). It participates in metabolic intermediate biosynthesis; chorismate biosynthesis; chorismate from D-erythrose 4-phosphate and phosphoenolpyruvate: step 4/7. Involved in the biosynthesis of the chorismate, which leads to the biosynthesis of aromatic amino acids. Catalyzes the reversible NADPH linked reduction of 3-dehydroshikimate (DHSA) to yield shikimate (SA). This chain is Shikimate dehydrogenase (NADP(+)), found in Shewanella oneidensis (strain ATCC 700550 / JCM 31522 / CIP 106686 / LMG 19005 / NCIMB 14063 / MR-1).